A 572-amino-acid chain; its full sequence is MSKLIKGIAASDGVAIAKAYLIVEPDLSYDSNEKVTDIESEVEKFNDAIEASKIELTKIRNNAEAQLGADKAAIFDAHLLVLDDPELIQPIQDKIRNDKVNAATGLDEVTTQFISIFESMDNEYMKERAADIRDVSKRVLAHILGVDLPNPSLINESAVIVGNDLTPSDTAQLNKEFVQGFVTNIGGRTSHSAIMSRSLEIAAVVGTKSITEEVKQGDMIIVDGMSGDVIIDPTEDELIAYQNKRERFFEDKKELQKLRDADTVTVDGVHAELAANIGTPDDLSGVIDNGAQGIGLYRTEFLYMGRDQMPTEEEQFEAYKKVLETMDGKRVVVRTLDIGGDKELPYLDLPKEMNPFLGYRAIRLCLAQPEIFRPQLRALLRASVYGKLNIMFPMVATIKEFRDAKSMLLEEKENLLREGYEVSDDIELGIMVEIPATAALADVFAKEVDFFSIGTNDLIQYTLAADRMSERVSYLYQPYNPSILRLVKQVIEASHKEGKWTGMCGEMAGDQTAVPLLLGLGLDEFSMSATSILKARRQINGLSKNEMAELANRAVECSTQEEVVDLVNQLAK.

The Tele-phosphohistidine intermediate role is filled by His-191. Phosphoenolpyruvate contacts are provided by Arg-298 and Arg-334. Mg(2+) is bound by residues Glu-433 and Asp-457. Phosphoenolpyruvate-binding positions include 456-457 (ND) and Arg-467. The Proton donor role is filled by Cys-504.

It belongs to the PEP-utilizing enzyme family. In terms of assembly, homodimer. It depends on Mg(2+) as a cofactor.

Its subcellular location is the cytoplasm. It catalyses the reaction L-histidyl-[protein] + phosphoenolpyruvate = N(pros)-phospho-L-histidyl-[protein] + pyruvate. In terms of biological role, general (non sugar-specific) component of the phosphoenolpyruvate-dependent sugar phosphotransferase system (sugar PTS). This major carbohydrate active-transport system catalyzes the phosphorylation of incoming sugar substrates concomitantly with their translocation across the cell membrane. Enzyme I transfers the phosphoryl group from phosphoenolpyruvate (PEP) to the phosphoryl carrier protein (HPr). This chain is Phosphoenolpyruvate-protein phosphotransferase (ptsI), found in Staphylococcus epidermidis (strain ATCC 35984 / DSM 28319 / BCRC 17069 / CCUG 31568 / BM 3577 / RP62A).